The chain runs to 226 residues: Exopolysaccharide production protein ExoY (226 aa).

The helical transmembrane segment at 34-54 (VLAASVALLLFSPLFLLIMAL) threads the bilayer.

It belongs to the bacterial sugar transferase family.

It is found in the cell membrane. It participates in glycan metabolism; exopolysaccharide biosynthesis. Its function is as follows. Needed for the addition of the first sugar (galactose) to the isoprenoid carrier. May function as a sugar transferase. This is Exopolysaccharide production protein ExoY (exoY) from Rhizobium meliloti (strain 1021) (Ensifer meliloti).